Reading from the N-terminus, the 293-residue chain is Ethanolamine ammonia-lyase small subunit (293 aa).

Adenosylcob(III)alamin-binding residues include Val-207 and Glu-228.

This sequence belongs to the EutC family. The basic unit is a heterodimer which dimerizes to form tetramers. The heterotetramers trimerize; 6 large subunits form a core ring with 6 small subunits projecting outwards. Requires adenosylcob(III)alamin as cofactor.

The protein localises to the bacterial microcompartment. It carries out the reaction ethanolamine = acetaldehyde + NH4(+). The protein operates within amine and polyamine degradation; ethanolamine degradation. In terms of biological role, catalyzes the deamination of various vicinal amino-alcohols to oxo compounds. Allows this organism to utilize ethanolamine as the sole source of nitrogen and carbon in the presence of external vitamin B12. This chain is Ethanolamine ammonia-lyase small subunit, found in Listeria monocytogenes serovar 1/2a (strain ATCC BAA-679 / EGD-e).